A 342-amino-acid chain; its full sequence is Methylthioribose-1-phosphate isomerase (342 aa).

Substrate contacts are provided by residues 49–51 (RGA), arginine 86, and glutamine 187. Aspartate 228 (proton donor) is an active-site residue. 238–239 (NK) is a substrate binding site.

This sequence belongs to the eIF-2B alpha/beta/delta subunits family. MtnA subfamily.

It catalyses the reaction 5-(methylsulfanyl)-alpha-D-ribose 1-phosphate = 5-(methylsulfanyl)-D-ribulose 1-phosphate. It functions in the pathway amino-acid biosynthesis; L-methionine biosynthesis via salvage pathway; L-methionine from S-methyl-5-thio-alpha-D-ribose 1-phosphate: step 1/6. Functionally, catalyzes the interconversion of methylthioribose-1-phosphate (MTR-1-P) into methylthioribulose-1-phosphate (MTRu-1-P). This is Methylthioribose-1-phosphate isomerase from Klebsiella pneumoniae (strain 342).